Consider the following 75-residue polypeptide: U6-lycotoxin-Ls1d (75 aa).

A signal peptide spans Met1–Ala21. The propeptide occupies Glu22–Arg25.

The protein belongs to the neurotoxin 19 (CSTX) family. 06 (U6-Lctx) subfamily. Contains 4 disulfide bonds. In terms of tissue distribution, expressed by the venom gland.

Its subcellular location is the secreted. This is U6-lycotoxin-Ls1d from Lycosa singoriensis (Wolf spider).